We begin with the raw amino-acid sequence, 1342 residues long: DNA-directed RNA polymerase subunit beta (1342 aa).

Belongs to the RNA polymerase beta chain family. As to quaternary structure, the RNAP catalytic core consists of 2 alpha, 1 beta, 1 beta' and 1 omega subunit. When a sigma factor is associated with the core the holoenzyme is formed, which can initiate transcription.

It carries out the reaction RNA(n) + a ribonucleoside 5'-triphosphate = RNA(n+1) + diphosphate. DNA-dependent RNA polymerase catalyzes the transcription of DNA into RNA using the four ribonucleoside triphosphates as substrates. The sequence is that of DNA-directed RNA polymerase subunit beta from Salmonella typhimurium (strain LT2 / SGSC1412 / ATCC 700720).